Consider the following 298-residue polypeptide: ATP phosphoribosyltransferase (298 aa).

Belongs to the ATP phosphoribosyltransferase family.

It localises to the cytoplasm. It catalyses the reaction 1-(5-phospho-beta-D-ribosyl)-ATP + diphosphate = 5-phospho-alpha-D-ribose 1-diphosphate + ATP. Its pathway is amino-acid biosynthesis; L-histidine biosynthesis; L-histidine from 5-phospho-alpha-D-ribose 1-diphosphate: step 1/9. Functionally, catalyzes the condensation of ATP and 5-phosphoribose 1-diphosphate to form N'-(5'-phosphoribosyl)-ATP (PR-ATP). Has a crucial role in the pathway because the rate of histidine biosynthesis seems to be controlled primarily by regulation of the enzymatic activity. The protein is ATP phosphoribosyltransferase (HIS1) of Candida albicans (strain SC5314 / ATCC MYA-2876) (Yeast).